The following is a 61-amino-acid chain: Odorranain-A6 (61 aa).

The N-terminal stretch at 1–22 is a signal peptide; it reads MFSMKKSLLLLFFLGTISLSLC. Residues 23–45 constitute a propeptide that is removed on maturation; that stretch reads EQERDAEEEEGSENGAEDIKINR.

The protein belongs to the frog skin active peptide (FSAP) family. Brevinin subfamily. Expressed by the skin glands.

It localises to the secreted. This Odorrana hainanensis (Odor frog) protein is Odorranain-A6.